Here is a 474-residue protein sequence, read N- to C-terminus: Amidophosphoribosyltransferase (474 aa).

A propeptide spanning residues 1–10 (MLGESEVRDK) is cleaved from the precursor. Cysteine 11 functions as the Nucleophile in the catalytic mechanism. Residues 11–234 (CGIVGIYSQD…PGEILHLNRG (224 aa)) enclose the Glutamine amidotransferase type-2 domain. Cysteine 250 provides a ligand contact to [4Fe-4S] cluster. Serine 297, aspartate 359, and aspartate 360 together coordinate Mg(2+). [4Fe-4S] cluster is bound by residues cysteine 396, cysteine 447, and cysteine 450.

The protein in the C-terminal section; belongs to the purine/pyrimidine phosphoribosyltransferase family. It depends on Mg(2+) as a cofactor. [4Fe-4S] cluster serves as cofactor.

It carries out the reaction 5-phospho-beta-D-ribosylamine + L-glutamate + diphosphate = 5-phospho-alpha-D-ribose 1-diphosphate + L-glutamine + H2O. It participates in purine metabolism; IMP biosynthesis via de novo pathway; N(1)-(5-phospho-D-ribosyl)glycinamide from 5-phospho-alpha-D-ribose 1-diphosphate: step 1/2. Its function is as follows. Catalyzes the formation of phosphoribosylamine from phosphoribosylpyrophosphate (PRPP) and glutamine. The protein is Amidophosphoribosyltransferase of Methanothermobacter thermautotrophicus (strain ATCC 29096 / DSM 1053 / JCM 10044 / NBRC 100330 / Delta H) (Methanobacterium thermoautotrophicum).